A 542-amino-acid chain; its full sequence is Phenylacetone monooxygenase (542 aa).

FAD is bound by residues Ser27, Glu46, Val54 to Trp57, Asp66, Tyr72, Val119, and Gln152. Arg64–Asp66 lines the NADP(+) pocket. Residues Thr194–Gln200, Arg217–Thr218, and Lys336–Arg337 contribute to the NADP(+) site. An FAD-binding site is contributed by Met446. Trp501 is an NADP(+) binding site.

This sequence belongs to the FAD-binding monooxygenase family. In terms of assembly, monomer. FAD is required as a cofactor.

The enzyme catalyses phenylacetone + NADPH + O2 + H(+) = benzyl acetate + NADP(+) + H2O. In terms of biological role, catalyzes a Baeyer-Villiger oxidation reaction, i.e. the insertion of an oxygen atom into a carbon-carbon bond adjacent to a carbonyl, which converts ketones to esters. Is most efficient with phenylacetone as substrate, leading to the formation of benzyl acetate. Can also oxidize other aromatic ketones (benzylacetone, alpha-methylphenylacetone and 4-hydroxyacetophenone), some aliphatic ketones (dodecan-2-one and bicyclohept-2-en-6-one) and sulfides (e.g. methyl 4-tolylsulfide). The polypeptide is Phenylacetone monooxygenase (pamO) (Thermobifida fusca (strain YX)).